The chain runs to 132 residues: Small ribosomal subunit protein uS11 (132 aa).

The segment at isoleucine 110 to leucine 132 is disordered. Residues arginine 123–leucine 132 show a composition bias toward basic residues.

This sequence belongs to the universal ribosomal protein uS11 family. In terms of assembly, component of the small ribosomal subunit. Mature ribosomes consist of a small (40S) and a large (60S) subunit. The 40S subunit contains about 32 different proteins and 1 molecule of RNA (18S). The 60S subunit contains 45 different proteins and 3 molecules of RNA (25S, 5.8S and 5S).

Its subcellular location is the cytoplasm. Functionally, component of the ribosome, a large ribonucleoprotein complex responsible for the synthesis of proteins in the cell. The small ribosomal subunit (SSU) binds messenger RNAs (mRNAs) and translates the encoded message by selecting cognate aminoacyl-transfer RNA (tRNA) molecules. The large subunit (LSU) contains the ribosomal catalytic site termed the peptidyl transferase center (PTC), which catalyzes the formation of peptide bonds, thereby polymerizing the amino acids delivered by tRNAs into a polypeptide chain. The nascent polypeptides leave the ribosome through a tunnel in the LSU and interact with protein factors that function in enzymatic processing, targeting, and the membrane insertion of nascent chains at the exit of the ribosomal tunnel. RPS14B is involved in nucleolar processing of pre-18S ribosomal RNA and ribosome assembly. The protein is Small ribosomal subunit protein uS11 (RPS14B) of Candida albicans (strain SC5314 / ATCC MYA-2876) (Yeast).